The sequence spans 259 residues: Type III pantothenate kinase (259 aa).

6 to 13 contributes to the ATP binding site; that stretch reads DCGNTNTV. Residue 107–110 participates in substrate binding; sequence GPDR. Asp109 (proton acceptor) is an active-site residue. Asp129 is a binding site for K(+). Thr132 contributes to the ATP binding site. Thr184 serves as a coordination point for substrate.

This sequence belongs to the type III pantothenate kinase family. As to quaternary structure, homodimer. It depends on NH4(+) as a cofactor. K(+) serves as cofactor.

The protein resides in the cytoplasm. The catalysed reaction is (R)-pantothenate + ATP = (R)-4'-phosphopantothenate + ADP + H(+). It functions in the pathway cofactor biosynthesis; coenzyme A biosynthesis; CoA from (R)-pantothenate: step 1/5. Catalyzes the phosphorylation of pantothenate (Pan), the first step in CoA biosynthesis. In Ruegeria pomeroyi (strain ATCC 700808 / DSM 15171 / DSS-3) (Silicibacter pomeroyi), this protein is Type III pantothenate kinase.